We begin with the raw amino-acid sequence, 360 residues long: MGVSDVFAVSGALEVVLEGVAGKGVMAVVYGSTRTSTIPGISIAGPSPEATLYTPTLDIEYLVAGRPLTLDVVPVSPEGVPTPAVITRAVARAFNIPLLPVDAGSWTEARVPHAKLPSRVTGGRIDVEPGLPSGASERLFREAYMLGSSLARGLDWIAVGESIPGGTTVAAAVMEALGYRAADLVSSSGKDNPRELKKRVVAQALSRLRECGARDVLEIVDCVGDPVHVSIAGLAVGAREAGAFVILAGGTQMGAVLAILSRLGMLDPRSTAVATTKWIALDRGSSIRGIVESIAPGLTVAAAGFSLEGSRYRGLRMYEEGYAKEGVGAGGSLVISLLRGAGVREILEAVESEYGRLLGG.

The protein belongs to the UPF0284 family.

The sequence is that of UPF0284 protein APE_2029.1 from Aeropyrum pernix (strain ATCC 700893 / DSM 11879 / JCM 9820 / NBRC 100138 / K1).